The following is a 662-amino-acid chain: Rap guanine nucleotide exchange factor-like 1 (662 aa).

The segment at 1–149 (MKPLEKFLKK…PPWAPLGAPE (149 aa)) is disordered. Over residues 20-48 (VTGGPGGGPGCCGGPGGGGGPGGGGGPAG) the composition is skewed to gly residues. Low complexity-rich tracts occupy residues 49–65 (GLRP…LLLP) and 116–133 (SGVP…ELSP). One can recognise a Ras-GEF domain in the interval 424–660 (EPEDVANHLT…FELSYKLEAN (237 aa)).

In terms of biological role, probable guanine nucleotide exchange factor (GEF). The protein is Rap guanine nucleotide exchange factor-like 1 (Rapgefl1) of Mus musculus (Mouse).